Consider the following 802-residue polypeptide: Elongation factor G, mitochondrial (802 aa).

The transit peptide at 1-24 (MRCPSLARLPNRALSGLTRSPVRL) directs the protein to the mitochondrion. Residues 100–387 (SRLRNIGIAA…GVIDYLPNPS (288 aa)) enclose the tr-type G domain. Residues 109–116 (AHIDSGKT), 185–189 (DTPGH), and 239–242 (NKMD) each bind GTP.

The protein belongs to the TRAFAC class translation factor GTPase superfamily. Classic translation factor GTPase family. EF-G/EF-2 subfamily.

The protein resides in the mitochondrion. It functions in the pathway protein biosynthesis; polypeptide chain elongation. Mitochondrial GTPase that catalyzes the GTP-dependent ribosomal translocation step during translation elongation. During this step, the ribosome changes from the pre-translocational (PRE) to the post-translocational (POST) state as the newly formed A-site-bound peptidyl-tRNA and P-site-bound deacylated tRNA move to the P and E sites, respectively. Catalyzes the coordinated movement of the two tRNA molecules, the mRNA and conformational changes in the ribosome. This chain is Elongation factor G, mitochondrial (mef1), found in Aspergillus fumigatus (strain CBS 144.89 / FGSC A1163 / CEA10) (Neosartorya fumigata).